The sequence spans 231 residues: tRNA (guanine-N(1)-)-methyltransferase (231 aa).

S-adenosyl-L-methionine contacts are provided by residues glycine 109 and 133–138 (IGDYVL).

Belongs to the RNA methyltransferase TrmD family. Homodimer.

It localises to the cytoplasm. It catalyses the reaction guanosine(37) in tRNA + S-adenosyl-L-methionine = N(1)-methylguanosine(37) in tRNA + S-adenosyl-L-homocysteine + H(+). In terms of biological role, specifically methylates guanosine-37 in various tRNAs. The chain is tRNA (guanine-N(1)-)-methyltransferase from Nocardia farcinica (strain IFM 10152).